We begin with the raw amino-acid sequence, 268 residues long: Tryptophan synthase alpha chain (268 aa).

Residues Glu-49 and Asp-60 each act as proton acceptor in the active site.

Belongs to the TrpA family. Tetramer of two alpha and two beta chains.

It catalyses the reaction (1S,2R)-1-C-(indol-3-yl)glycerol 3-phosphate + L-serine = D-glyceraldehyde 3-phosphate + L-tryptophan + H2O. It participates in amino-acid biosynthesis; L-tryptophan biosynthesis; L-tryptophan from chorismate: step 5/5. In terms of biological role, the alpha subunit is responsible for the aldol cleavage of indoleglycerol phosphate to indole and glyceraldehyde 3-phosphate. The polypeptide is Tryptophan synthase alpha chain (Pseudomonas aeruginosa (strain ATCC 15692 / DSM 22644 / CIP 104116 / JCM 14847 / LMG 12228 / 1C / PRS 101 / PAO1)).